The sequence spans 347 residues: Phenylalanine--tRNA ligase alpha subunit (347 aa).

Glutamate 262 contributes to the Mg(2+) binding site.

The protein belongs to the class-II aminoacyl-tRNA synthetase family. Phe-tRNA synthetase alpha subunit type 1 subfamily. As to quaternary structure, tetramer of two alpha and two beta subunits. The cofactor is Mg(2+).

It is found in the cytoplasm. The enzyme catalyses tRNA(Phe) + L-phenylalanine + ATP = L-phenylalanyl-tRNA(Phe) + AMP + diphosphate + H(+). The protein is Phenylalanine--tRNA ligase alpha subunit of Roseiflexus castenholzii (strain DSM 13941 / HLO8).